A 98-amino-acid polypeptide reads, in one-letter code: MTPTHMNITLAFTISLLGMLIYRSHLMASLLCLEGMMMSLFIMTAVMASNAHSPLINIMPIIMLVFAACEAAVGLALLVSISNTYGLDHINNLSLLQC.

The next 3 helical transmembrane spans lie at 1–21 (MTPTHMNITLAFTISLLGMLI), 26–46 (LMASLLCLEGMMMSLFIMTAV), and 61–81 (IIMLVFAACEAAVGLALLVSI).

It belongs to the complex I subunit 4L family. As to quaternary structure, core subunit of respiratory chain NADH dehydrogenase (Complex I) which is composed of 45 different subunits.

It localises to the mitochondrion inner membrane. It carries out the reaction a ubiquinone + NADH + 5 H(+)(in) = a ubiquinol + NAD(+) + 4 H(+)(out). Core subunit of the mitochondrial membrane respiratory chain NADH dehydrogenase (Complex I) which catalyzes electron transfer from NADH through the respiratory chain, using ubiquinone as an electron acceptor. Part of the enzyme membrane arm which is embedded in the lipid bilayer and involved in proton translocation. The sequence is that of NADH-ubiquinone oxidoreductase chain 4L (MT-ND4L) from Papio hamadryas (Hamadryas baboon).